A 257-amino-acid chain; its full sequence is Acetylglutamate kinase (257 aa).

Substrate contacts are provided by residues 41-42, R63, and N155; that span reads GG.

The protein belongs to the acetylglutamate kinase family. ArgB subfamily.

It localises to the cytoplasm. It catalyses the reaction N-acetyl-L-glutamate + ATP = N-acetyl-L-glutamyl 5-phosphate + ADP. It functions in the pathway amino-acid biosynthesis; L-arginine biosynthesis; N(2)-acetyl-L-ornithine from L-glutamate: step 2/4. Its function is as follows. Catalyzes the ATP-dependent phosphorylation of N-acetyl-L-glutamate. The protein is Acetylglutamate kinase of Solibacter usitatus (strain Ellin6076).